The sequence spans 236 residues: SERTA domain-containing protein 1 (236 aa).

The tract at residues 1–20 (MLSKGLKRKREEEEEKEPLA) is disordered. One can recognise an SERTA domain in the interval 38-85 (PAVASSSLFDLSVLKLHHSLQQSEPDLRHLVLVVNTLRRIQASMAPAA). The segment at 189–211 (PASEGLKPGPEDGPGKEEAPELD) is disordered. Positions 197–207 (GPEDGPGKEEA) are enriched in basic and acidic residues.

As to quaternary structure, interacts with the PHD-bromodomain of TIF1, TRIM28/TIF1B and p300/CBP. Interacts with E2F1 and TFDP1; modulates transactivation activity of TFDP1/E2F complexes. Also interacts with CDK4. In terms of processing, polyubiquitinated, which promotes proteasomal degradation.

Its function is as follows. Acts at E2F-responsive promoters as coregulator to integrate signals provided by PHD- and/or bromodomain-containing transcription factors. Stimulates E2F1/TFDP1 transcriptional activity. Renders the activity of cyclin D1/CDK4 resistant to the inhibitory effects of CDKN2A/p16INK4A. The protein is SERTA domain-containing protein 1 (SERTAD1) of Homo sapiens (Human).